The following is a 129-amino-acid chain: Histone H3 (129 aa).

Residues 1-36 (MSRTKETARAKRTITSKKSKKAPSGASGVKRSHRRW) are disordered. Residues 10–21 (AKRTITSKKSKK) are compositionally biased toward basic residues.

It belongs to the histone H3 family. As to quaternary structure, the nucleosome is a histone octamer containing two molecules each of H2A, H2B, H3 and H4 assembled in one H3-H4 heterotetramer and two H2A-H2B heterodimers. The octamer wraps approximately 147 bp of DNA.

It is found in the nucleus. The protein localises to the chromosome. Its function is as follows. Core component of nucleosome. Nucleosomes wrap and compact DNA into chromatin, limiting DNA accessibility to the cellular machineries which require DNA as a template. Histones thereby play a central role in transcription regulation, DNA repair, DNA replication and chromosomal stability. DNA accessibility is regulated via a complex set of post-translational modifications of histones, also called histone code, and nucleosome remodeling. In Leishmania infantum, this protein is Histone H3.